The primary structure comprises 95 residues: Small ribosomal subunit protein bS6 (95 aa).

This sequence belongs to the bacterial ribosomal protein bS6 family.

Its function is as follows. Binds together with bS18 to 16S ribosomal RNA. The chain is Small ribosomal subunit protein bS6 from Nocardia farcinica (strain IFM 10152).